Consider the following 517-residue polypeptide: Ribonuclease Y (517 aa).

A helical transmembrane segment spans residues 1–21 (MIEVVVGIGAGLIGIGAGYLV). The KH domain occupies 207-273 (LINVVNIKND…TRVIELLVED (67 aa)). The HD domain maps to 333–426 (ALAHSLEVAH…VCAADALSAA (94 aa)).

It belongs to the RNase Y family.

It localises to the cell membrane. Endoribonuclease that initiates mRNA decay. In Campylobacter fetus subsp. fetus (strain 82-40), this protein is Ribonuclease Y.